The primary structure comprises 352 residues: D-alanine--D-alanine ligase (352 aa).

The ATP-grasp domain maps to 133 to 342; sequence KTVFAAAGLP…FPKLVDRLIQ (210 aa). 169–224 lines the ATP pocket; the sequence is DETIGYPNFVKPANLGSSVGISKVRSRLELEAALDSAASFDRRIVVEAGVVAREVE. Mg(2+) is bound by residues Asp-295, Glu-309, and Asn-311.

The protein belongs to the D-alanine--D-alanine ligase family. Requires Mg(2+) as cofactor. It depends on Mn(2+) as a cofactor.

It is found in the cytoplasm. It carries out the reaction 2 D-alanine + ATP = D-alanyl-D-alanine + ADP + phosphate + H(+). It participates in cell wall biogenesis; peptidoglycan biosynthesis. In terms of biological role, cell wall formation. The polypeptide is D-alanine--D-alanine ligase (Acaryochloris marina (strain MBIC 11017)).